A 1047-amino-acid chain; its full sequence is MEQETPEKVDSAQEKVRGKSQPADDSEDSREKAGTEGTGELTEAYELQVAEEMAKEIKKKIRRKLKEQLTYFPPDTLLHDDKLGSEKRKKKKKKKVPVPAKPETSPSDVCDSAAEGEQKKEGAPEGSHHREGGCSTEQNADASVPENTKPKPKKMKKKPKAVSEDNEETNGDGVHEITGRDSPVHPKCLLDDDLVMGVYIHRTDRLKSDFMISHPMVKIHVVDEHTGQYVKKDDSERPVSSYYEKDNVDYILPIMTQPYDFKKLKSRLPEWEEQVIFNENFPYLLREFDECPKVILFFEILDFLSMDEIKNNSEFQNQECGFRKIAWAFLKLLGANGNANINSKLRLQLYYPPTKPRSQPNVVEVFEWWSKCPRNRYPSTLYVTVRGLKVPDCIKPSYRSMMALQEERGTPVYCERHRETSSVDTEPGLEDSKEEVKWKRLPGQACRIPNKHLFSLNAGERGCFCLDFSHNGRILAAACASRDGYPIILYEIPSGRFMRELCGHLNIIYDLDWSKDDRYLVTSSSDGTARVWKNEINSTSTFRVLPHPSFVYTARFHPATRELVVTGCYDSMIRIWKVDAREDAAILVRQLDVHKSFVNSICFDDEGHHMYSGDCIGVIAVWDTYVKVTDVQHSVRHWTINKEIKETEFRGVPVSYLEVHPNGKRLLIHTKDSTLRIMDLRILAARKFVGAANYREKIHSTLTPCGTLLFSGSEDGIVYVWNPETGEQVAMYSELPFKSTIRDISYHPFENMVAFCAFGQSEPILLYIYDFQVAQQEAEMLKRYSGTVPLPGIHLSEDALCTCPKLPQQGSFQIDEFVNTENNSSRKIQLVKQRLETVTEVIRSCAAKVNKNLSITSPPPGPAKKPRVKQSFVLTTDQIIHQFGVPQTAFISIERRPFMRPVDPPPMVVALYDYTASRSDELTIHRGDIIRVFFKDNEDWWYGSLGKGQEGFFPANHVASETLYRDSPPKVKERSPPLTPKEKAKMEKPPASRKSLIKDRFLDSRLGSKPMGHSEKGRDQNFEERGHKSDMEMKKSEPTVRKVTLIE.

Composition is skewed to basic and acidic residues over residues 1 to 17 and 77 to 86; these read MEQE…EKVR and LLHDDKLGSE. Disordered stretches follow at residues 1-44 and 67-185; these read MEQE…LTEA and EQLT…SPVH. The tract at residues 1-285 is interaction with HAP1; it reads MEQETPEKVD…IFNENFPYLL (285 aa). Residues 87 to 96 show a composition bias toward basic residues; it reads KRKKKKKKKV. A compositionally biased stretch (basic and acidic residues) spans 116–132; the sequence is GEQKKEGAPEGSHHREG. Residues 150-160 show a composition bias toward basic residues; it reads PKPKKMKKKPK. The segment covering 173-185 has biased composition (basic and acidic residues); sequence GVHEITGRDSPVH. 7 WD repeats span residues 458–500, 503–542, 546–586, 593–632, 649–688, 692–731, and 736–777; these read AGER…FMRE, GHLN…TSTF, PHPS…DAAI, VHKS…TDVQ, FRGV…ARKF, ANYR…QVAM, and PFKS…AQQE. Residue S854 is modified to Phosphoserine. The 61-residue stretch at 903-963 folds into the SH3 domain; sequence DPPPMVVALY…PANHVASETL (61 aa). Composition is skewed to basic and acidic residues over residues 964–1003 and 1012–1040; these read YRDS…RFLD and GHSE…EPTV. The segment at 964-1047 is disordered; that stretch reads YRDSPPKVKE…PTVRKVTLIE (84 aa). S975 bears the Phosphoserine mark.

Self-associates. Part of the tectonic-like complex (also named B9 complex). Interacts with MKS1. Interacts with NPHP1; probably as heterodimers and/or AHI1(2):NPHP1(2) heterotetramers. Interacts (via SH3 domain) with the dynamin GTPase DNM2. Interacts with HAP1; probably as AHI1(2):HAP1(2) heterotetramers. Interacts with RAB8A. Interacts with CEND1. Interacts with SPATA7.

Its subcellular location is the cytoplasm. It localises to the cytoskeleton. The protein resides in the cilium basal body. It is found in the microtubule organizing center. The protein localises to the centrosome. Its subcellular location is the centriole. It localises to the cell junction. The protein resides in the adherens junction. Functionally, involved in vesicle trafficking and required for ciliogenesis, formation of primary non-motile cilium, and recruitment of RAB8A to the basal body of primary cilium. Component of the tectonic-like complex, a complex localized at the transition zone of primary cilia and acting as a barrier that prevents diffusion of transmembrane proteins between the cilia and plasma membranes. Involved in neuronal differentiation. As a positive modulator of classical Wnt signaling, may play a crucial role in ciliary signaling during cerebellum embryonic development. The protein is Jouberin (Ahi1) of Rattus norvegicus (Rat).